The primary structure comprises 140 residues: Nucleoside diphosphate kinase (140 aa).

Residues lysine 11, phenylalanine 59, arginine 87, threonine 93, arginine 104, and asparagine 114 each contribute to the ATP site. The Pros-phosphohistidine intermediate role is filled by histidine 117.

Belongs to the NDK family. As to quaternary structure, homotetramer. The cofactor is Mg(2+).

It is found in the cytoplasm. It catalyses the reaction a 2'-deoxyribonucleoside 5'-diphosphate + ATP = a 2'-deoxyribonucleoside 5'-triphosphate + ADP. The catalysed reaction is a ribonucleoside 5'-diphosphate + ATP = a ribonucleoside 5'-triphosphate + ADP. In terms of biological role, major role in the synthesis of nucleoside triphosphates other than ATP. The ATP gamma phosphate is transferred to the NDP beta phosphate via a ping-pong mechanism, using a phosphorylated active-site intermediate. This chain is Nucleoside diphosphate kinase, found in Rhodopseudomonas palustris (strain BisB18).